A 288-amino-acid chain; its full sequence is Phosphatidylserine decarboxylase proenzyme (288 aa).

Catalysis depends on charge relay system; for autoendoproteolytic cleavage activity residues aspartate 90, histidine 147, and serine 254. The active-site Schiff-base intermediate with substrate; via pyruvic acid; for decarboxylase activity is serine 254. Serine 254 is subject to Pyruvic acid (Ser); by autocatalysis.

This sequence belongs to the phosphatidylserine decarboxylase family. PSD-B subfamily. Prokaryotic type I sub-subfamily. Heterodimer of a large membrane-associated beta subunit and a small pyruvoyl-containing alpha subunit. Pyruvate is required as a cofactor. Is synthesized initially as an inactive proenzyme. Formation of the active enzyme involves a self-maturation process in which the active site pyruvoyl group is generated from an internal serine residue via an autocatalytic post-translational modification. Two non-identical subunits are generated from the proenzyme in this reaction, and the pyruvate is formed at the N-terminus of the alpha chain, which is derived from the carboxyl end of the proenzyme. The autoendoproteolytic cleavage occurs by a canonical serine protease mechanism, in which the side chain hydroxyl group of the serine supplies its oxygen atom to form the C-terminus of the beta chain, while the remainder of the serine residue undergoes an oxidative deamination to produce ammonia and the pyruvoyl prosthetic group on the alpha chain. During this reaction, the Ser that is part of the protease active site of the proenzyme becomes the pyruvoyl prosthetic group, which constitutes an essential element of the active site of the mature decarboxylase.

The protein localises to the cell membrane. The catalysed reaction is a 1,2-diacyl-sn-glycero-3-phospho-L-serine + H(+) = a 1,2-diacyl-sn-glycero-3-phosphoethanolamine + CO2. Its pathway is phospholipid metabolism; phosphatidylethanolamine biosynthesis; phosphatidylethanolamine from CDP-diacylglycerol: step 2/2. Functionally, catalyzes the formation of phosphatidylethanolamine (PtdEtn) from phosphatidylserine (PtdSer). The sequence is that of Phosphatidylserine decarboxylase proenzyme from Hamiltonella defensa subsp. Acyrthosiphon pisum (strain 5AT).